A 95-amino-acid polypeptide reads, in one-letter code: Integration host factor subunit beta (95 aa).

It belongs to the bacterial histone-like protein family. As to quaternary structure, heterodimer of an alpha and a beta chain.

In terms of biological role, this protein is one of the two subunits of integration host factor, a specific DNA-binding protein that functions in genetic recombination as well as in transcriptional and translational control. In Psychromonas ingrahamii (strain DSM 17664 / CCUG 51855 / 37), this protein is Integration host factor subunit beta.